A 205-amino-acid chain; its full sequence is Transcription antitermination protein NusB (205 aa).

This sequence belongs to the NusB family.

Functionally, involved in transcription antitermination. Required for transcription of ribosomal RNA (rRNA) genes. Binds specifically to the boxA antiterminator sequence of the ribosomal RNA (rrn) operons. This chain is Transcription antitermination protein NusB, found in Acaryochloris marina (strain MBIC 11017).